The sequence spans 653 residues: Leucine-rich repeat-containing protein 4 (653 aa).

The signal sequence occupies residues 1-38 (MKLLWQVTVHHHTWNAILLPFVYLTAQVWILCAAIAAA). The 37-residue stretch at 39–75 (ASAGPQNCPSVCSCSNQFSKVVCTRRGLSEVPQGIPS) folds into the LRRNT domain. Topologically, residues 39–527 (ASAGPQNCPS…SLDEVMKTTK (489 aa)) are extracellular. Disulfide bonds link cysteine 46–cysteine 52 and cysteine 50–cysteine 61. LRR repeat units lie at residues 76 to 97 (NTRY…TFRH), 100 to 121 (HLEV…AFNG), 124 to 145 (SLNT…AFEY), 148 to 169 (KLRE…AFNR), 172 to 194 (SLMR…AFEG), 197 to 218 (NLKY…TPLV), 219 to 240 (GLEE…SFHG), 243 to 264 (SLKK…AFDG), and 267 to 288 (SLVE…LFTP). Asparagine 277, asparagine 322, asparagine 363, asparagine 388, asparagine 410, asparagine 434, asparagine 440, asparagine 447, and asparagine 450 each carry an N-linked (GlcNAc...) asparagine glycan. The LRRCT domain occupies 300 to 352 (NPWNCDCDILWLAWWLREYIPTNSTCCGRCHAPMHMRGRYLVEVDQASFQCSA). 2 cysteine pairs are disulfide-bonded: cysteine 304–cysteine 329 and cysteine 306–cysteine 350. In terms of domain architecture, Ig-like spans 353–442 (PFIMDAPRDL…SNASAYLNVS (90 aa)). A disulfide bond links cysteine 374 and cysteine 424. Residues 528 to 548 (IIIGCFVAVTLLAAAMLIVFY) form a helical membrane-spanning segment. The Cytoplasmic portion of the chain corresponds to 549–653 (KLRKRHQQRS…TKDKVQETQI (105 aa)).

Interacts with DLG4. Interacts (via LRR repeats) with NTNG2. Forms a complex with DLG4 and with NMDA receptors. In terms of processing, N-glycosylated. As to expression, specifically expressed in brain.

It is found in the membrane. It localises to the postsynaptic cell membrane. In terms of biological role, synaptic adhesion protein. Regulates the formation of exitatory synapses through the recruitment of pre-and-postsynaptic proteins. Organize the lamina/pathway-specific differentiation of dendrites. Plays an important role for auditory synaptic responses. Involved in the suppression of glioma. The chain is Leucine-rich repeat-containing protein 4 (LRRC4) from Homo sapiens (Human).